The primary structure comprises 331 residues: Ketol-acid reductoisomerase (NADP(+)) (331 aa).

Positions 2–182 (ARMYYDSDAN…GGTRAGILET (181 aa)) constitute a KARI N-terminal Rossmann domain. NADP(+) is bound by residues 25–28 (YGSQ), S51, S53, and 83–86 (DEVQ). Residue H108 is part of the active site. Residue G134 coordinates NADP(+). Positions 183–328 (TFREETETDL…KDLRAMFSWL (146 aa)) constitute a KARI C-terminal knotted domain. Mg(2+)-binding residues include D191, E195, E227, and E231. S252 is a binding site for substrate.

The protein belongs to the ketol-acid reductoisomerase family. It depends on Mg(2+) as a cofactor.

The catalysed reaction is (2R)-2,3-dihydroxy-3-methylbutanoate + NADP(+) = (2S)-2-acetolactate + NADPH + H(+). The enzyme catalyses (2R,3R)-2,3-dihydroxy-3-methylpentanoate + NADP(+) = (S)-2-ethyl-2-hydroxy-3-oxobutanoate + NADPH + H(+). Its pathway is amino-acid biosynthesis; L-isoleucine biosynthesis; L-isoleucine from 2-oxobutanoate: step 2/4. The protein operates within amino-acid biosynthesis; L-valine biosynthesis; L-valine from pyruvate: step 2/4. Its function is as follows. Involved in the biosynthesis of branched-chain amino acids (BCAA). Catalyzes an alkyl-migration followed by a ketol-acid reduction of (S)-2-acetolactate (S2AL) to yield (R)-2,3-dihydroxy-isovalerate. In the isomerase reaction, S2AL is rearranged via a Mg-dependent methyl migration to produce 3-hydroxy-3-methyl-2-ketobutyrate (HMKB). In the reductase reaction, this 2-ketoacid undergoes a metal-dependent reduction by NADPH to yield (R)-2,3-dihydroxy-isovalerate. The polypeptide is Ketol-acid reductoisomerase (NADP(+)) (Trichodesmium erythraeum (strain IMS101)).